We begin with the raw amino-acid sequence, 275 residues long: Expansin-B6 (275 aa).

The signal sequence occupies residues 1–25 (MAARMGSKVAAILAILSVLVVHGSC). Asn-33 is a glycosylation site (N-linked (GlcNAc...) asparagine). In terms of domain architecture, Expansin-like EG45 spans 64–170 (GGACGFKNVN…RRVPCNYPGL (107 aa)). 3 disulfide bridges follow: Cys-67–Cys-95, Cys-98–Cys-165, and Cys-103–Cys-109. The Expansin-like CBD domain maps to 183–270 (VYFAVLVEYE…NWSPNSNYRS (88 aa)).

Belongs to the expansin family. Expansin B subfamily. As to expression, expressed in internodes.

It localises to the secreted. Its subcellular location is the cell wall. It is found in the membrane. May cause loosening and extension of plant cell walls by disrupting non-covalent bonding between cellulose microfibrils and matrix glucans. No enzymatic activity has been found. May be required for rapid internodal elongation in deepwater rice during submergence. The sequence is that of Expansin-B6 (EXPB6) from Oryza sativa subsp. japonica (Rice).